We begin with the raw amino-acid sequence, 353 residues long: Ferredoxin--NADP reductase (353 aa).

FAD contacts are provided by Asp-33, Gln-41, Tyr-46, Val-86, Phe-121, Asp-293, and Thr-333.

It belongs to the ferredoxin--NADP reductase type 2 family. Homodimer. Requires FAD as cofactor.

It carries out the reaction 2 reduced [2Fe-2S]-[ferredoxin] + NADP(+) + H(+) = 2 oxidized [2Fe-2S]-[ferredoxin] + NADPH. The sequence is that of Ferredoxin--NADP reductase from Verminephrobacter eiseniae (strain EF01-2).